We begin with the raw amino-acid sequence, 356 residues long: Protein RecA (356 aa).

Residue 77-84 (GPESSGKT) coordinates ATP.

The protein belongs to the RecA family.

It localises to the cytoplasm. In terms of biological role, can catalyze the hydrolysis of ATP in the presence of single-stranded DNA, the ATP-dependent uptake of single-stranded DNA by duplex DNA, and the ATP-dependent hybridization of homologous single-stranded DNAs. It interacts with LexA causing its activation and leading to its autocatalytic cleavage. The sequence is that of Protein RecA from Caulobacter vibrioides (strain ATCC 19089 / CIP 103742 / CB 15) (Caulobacter crescentus).